The following is a 364-amino-acid chain: BTB/POZ and TAZ domain-containing protein 2 (364 aa).

One can recognise a BTB domain in the interval 34–106; the sequence is SDVEIVTSDN…LYSSSLTEDE (73 aa). The short motif at 203-212 is the Nuclear localization signal element; sequence RKKRRRRHRK. The TAZ-type zinc-finger motif lies at 215 to 316; that stretch reads DLYMQLSEAM…PDSCRVPLCR (102 aa). Positions 327-350 are caM-binding; that stretch reads KMGEDTKWKLLVTRVVSAKAMTSL.

Interacts with CUL3A. Interacts with GTE11/BET10 through the BTB domain. In terms of tissue distribution, preferentially expressed in young leaves and roots.

It is found in the nucleus. The protein localises to the cytoplasm. Its pathway is protein modification; protein ubiquitination. In terms of biological role, may act as a substrate-specific adapter of an E3 ubiquitin-protein ligase complex (CUL3-RBX1-BTB) which mediates the ubiquitination and subsequent proteasomal degradation of target proteins. Plays a key role as a component of the TAC1-mediated telomerase activation pathway certainly by targeting a telomerase repressor to degradation. Seems to occupy an integral position in a complex signaling network that perceives, integrates, and responds to multiple, and sometimes competing, signals. Enhances responses to auxin in postgermination and vegetative development. Also negatively regulates ABA- and sugar-mediated inhibition of the germination. Essential for female and male gametophyte development. This Arabidopsis thaliana (Mouse-ear cress) protein is BTB/POZ and TAZ domain-containing protein 2 (BT2).